A 583-amino-acid polypeptide reads, in one-letter code: Poly [ADP-ribose] polymerase 2 (583 aa).

The disordered stretch occupies residues 1-77 (MAARRRRSTG…GMPGRSWASK (77 aa)). The segment at 1–103 (MAARRRRSTG…VDPECTAKVG (103 aa)) is N-terminal region (NTR). Short sequence motifs (nuclear localization signal) lie at residues 21–22 (KR) and 35–40 (PAKKTR). Lys-37 and Lys-38 each carry N6-acetyllysine. Positions 57-67 (ANKDRTEDKQD) are enriched in basic and acidic residues. The 98-residue stretch at 104–201 (KAHVYCEGND…EKFEKVPGKY (98 aa)) folds into the WGR domain. 2 positions are modified to phosphoserine: Ser-226 and Ser-232. One can recognise a PARP alpha-helical domain in the interval 231–348 (ESQLDLRVQE…DIEIAIKLVK (118 aa)). The region spanning 356–583 (HPLDQHYRNL…KVQFNFLQLW (228 aa)) is the PARP catalytic domain. NAD(+) is bound by residues 428–430 (HGS), Gly-437, Arg-444, and Ser-470. The For poly [ADP-ribose] polymerase activity role is filled by Glu-558.

The protein belongs to the ARTD/PARP family. As to quaternary structure, component of a base excision repair (BER) complex, containing at least XRCC1, PARP1, POLB and LRIG3. Homo- and heterodimer with PARP1. Interacts (via the PARP catalytic domain) with HPF1. Interacts with core nucleosomes. Post-translationally, auto poly-ADP-ribosylated on serine residues, leading to dissociation of the PARP2-HPF1 complex from chromatin. Poly-ADP-ribosylated by PARP1. In terms of processing, acetylation reduces DNA binding and enzymatic activity. Proteolytically cleaved by caspase-8 (CASP8) in response to apoptosis, leading to its inactivation. Widely expressed, mainly in actively dividing tissues. The highest levels are in the brain, heart, pancreas, skeletal muscle and testis; also detected in kidney, liver, lung, placenta, ovary and spleen; levels are low in leukocytes, colon, small intestine, prostate and thymus.

The protein localises to the nucleus. It localises to the chromosome. The catalysed reaction is NAD(+) + (ADP-D-ribosyl)n-acceptor = nicotinamide + (ADP-D-ribosyl)n+1-acceptor + H(+).. It carries out the reaction L-seryl-[protein] + NAD(+) = O-(ADP-D-ribosyl)-L-seryl-[protein] + nicotinamide + H(+). It catalyses the reaction L-aspartyl-[protein] + NAD(+) = 4-O-(ADP-D-ribosyl)-L-aspartyl-[protein] + nicotinamide. The enzyme catalyses L-glutamyl-[protein] + NAD(+) = 5-O-(ADP-D-ribosyl)-L-glutamyl-[protein] + nicotinamide. Its activity is regulated as follows. ADP-ribosyltransferase activity is regulated via an allosteric activation mechanism. In absence of activation signal, PARP2 is autoinhibited by the PARP alpha-helical domain (also named HD region), which prevents effective NAD(+)-binding. Activity is highly stimulated by signals, which unfold the PARP alpha-helical domain, relieving autoinhibition. Poly-ADP-ribosyltransferase activity is tightly regulated and PARP2 is removed from damaged chromatin following initial poly-ADP-ribosylation of chromatin to avoid prolonged residence (trapping) that has cytotoxic consequences. CHD1L promotes PARP2 removal from chromatin. ADP-ribosyltransferase activity is inhibited by a number of PARP inhibitors (PARPi) compounds, that are used the treatment of breast or ovarian cancers that have defects in DNA repair by homologous recombination. PARPi molecules (niraparib, talazoparib, and, to a lesser extent, olaparib) also trap PARP2 at DNA damage sites. Poly-ADP-ribosyltransferase that mediates poly-ADP-ribosylation of proteins and plays a key role in DNA repair. Mediates glutamate, aspartate or serine ADP-ribosylation of proteins: the ADP-D-ribosyl group of NAD(+) is transferred to the acceptor carboxyl group of target residues and further ADP-ribosyl groups are transferred to the 2'-position of the terminal adenosine moiety, building up a polymer with an average chain length of 20-30 units. Serine ADP-ribosylation of proteins constitutes the primary form of ADP-ribosylation of proteins in response to DNA damage. Mediates glutamate and aspartate ADP-ribosylation of target proteins in absence of HPF1. Following interaction with HPF1, catalyzes serine ADP-ribosylation of target proteins; HPF1 conferring serine specificity by completing the PARP2 active site. PARP2 initiates the repair of double-strand DNA breaks: recognizes and binds DNA breaks within chromatin and recruits HPF1, licensing serine ADP-ribosylation of target proteins, such as histones, thereby promoting decompaction of chromatin and the recruitment of repair factors leading to the reparation of DNA strand breaks. HPF1 initiates serine ADP-ribosylation but restricts the polymerase activity of PARP2 in order to limit the length of poly-ADP-ribose chains. Specifically mediates formation of branched poly-ADP-ribosylation. Branched poly-ADP-ribose chains are specifically recognized by some factors, such as APLF. In addition to proteins, also able to ADP-ribosylate DNA: preferentially acts on 5'-terminal phosphates at DNA strand breaks termini in nicked duplex. In Homo sapiens (Human), this protein is Poly [ADP-ribose] polymerase 2.